The primary structure comprises 337 residues: Lipopolysaccharide 1,3-galactosyltransferase (337 aa).

UDP is bound by residues 33-38 (GIDKNF) and 130-131 (DA). 2 residues coordinate Mg(2+): Asp130 and Asp132. Short sequence motifs (DXD) lie at residues 130–132 (DAD) and 219–221 (DQD). His264 is a Mg(2+) binding site. 264–270 (HYIGPTK) is a UDP binding site.

The protein belongs to the glycosyltransferase 8 family. Mg(2+) serves as cofactor.

It catalyses the reaction UDP-alpha-D-galactose + [lipopolysaccharide] = UDP + 3-alpha-D-galactosyl-[lipopolysaccharide].. Its pathway is bacterial outer membrane biogenesis; LPS core biosynthesis. With respect to regulation, inhibited in a competitive manner by closely related nonsubstrate lipopolysaccharides. In terms of biological role, galactosyltransferase involved in the biosynthesis of the core oligosaccharide region of lipopolysaccharide (LPS). Catalyzes the addition of an alpha l,3-linked galactose (galactose I) to the first outer-core glucose (glucose I). Cannot use UDP-glucose. Activity probably does not require the branched galactose added by WaaB, but it is higher in the presence of this branched galactose. In Salmonella typhimurium (strain LT2 / SGSC1412 / ATCC 700720), this protein is Lipopolysaccharide 1,3-galactosyltransferase.